Here is a 229-residue protein sequence, read N- to C-terminus: Cytidylate kinase (229 aa).

An ATP-binding site is contributed by 12–20 (GPSGAGKGT).

This sequence belongs to the cytidylate kinase family. Type 1 subfamily.

The protein resides in the cytoplasm. It catalyses the reaction CMP + ATP = CDP + ADP. It carries out the reaction dCMP + ATP = dCDP + ADP. This chain is Cytidylate kinase, found in Pseudomonas aeruginosa (strain LESB58).